The primary structure comprises 668 residues: Kinesin-like protein KIF2B (668 aa).

A Phosphothreonine; by PLK1 modification is found at Thr125. A coiled-coil region spans residues Cys149–Asp177. The residue at position 204 (Ser204) is a Phosphoserine; by PLK1. Residues Arg213–Leu543 form the Kinesin motor domain. Gly303 to Thr310 lines the ATP pocket. A compositionally biased stretch (basic and acidic residues) spans Pro585–Pro604. Residues Pro585–Ala605 are disordered. A coiled-coil region spans residues Val646–Val667.

Belongs to the TRAFAC class myosin-kinesin ATPase superfamily. Kinesin family. MCAK/KIF2 subfamily. In terms of processing, phosphorylation at Thr-125 by PLK1 is required for activity in the correction of kinetochore-microtubules attachment errors, while phosphorylation at Ser-204 also by PLK1 is required for the kinetochore localization and activity in prometaphase.

It is found in the cytoplasm. It localises to the cytoskeleton. The protein localises to the microtubule organizing center. The protein resides in the centrosome. Its subcellular location is the spindle. It is found in the chromosome. It localises to the centromere. The protein localises to the kinetochore. Its function is as follows. Plus end-directed microtubule-dependent motor required for spindle assembly and chromosome movement during mitosis. Has microtubule depolymerization activity. Plays a role in chromosome congression. In Mus musculus (Mouse), this protein is Kinesin-like protein KIF2B (Kif2b).